Consider the following 347-residue polypeptide: Ribosomal RNA large subunit methyltransferase M (347 aa).

Residues S184, 217–220 (APGG), D236, D256, and D272 contribute to the S-adenosyl-L-methionine site. The active-site Proton acceptor is the K301.

This sequence belongs to the class I-like SAM-binding methyltransferase superfamily. RNA methyltransferase RlmE family. RlmM subfamily. Monomer.

It localises to the cytoplasm. It carries out the reaction cytidine(2498) in 23S rRNA + S-adenosyl-L-methionine = 2'-O-methylcytidine(2498) in 23S rRNA + S-adenosyl-L-homocysteine + H(+). Catalyzes the 2'-O-methylation at nucleotide C2498 in 23S rRNA. The sequence is that of Ribosomal RNA large subunit methyltransferase M from Xanthomonas oryzae pv. oryzae (strain KACC10331 / KXO85).